A 427-amino-acid chain; its full sequence is Serine hydroxymethyltransferase (427 aa).

(6S)-5,6,7,8-tetrahydrofolate is bound by residues Leu-122 and 126-128 (GHL). Lys-231 is modified (N6-(pyridoxal phosphate)lysine). Residues Glu-247 and 355-357 (SPF) contribute to the (6S)-5,6,7,8-tetrahydrofolate site.

The protein belongs to the SHMT family. Homodimer. It depends on pyridoxal 5'-phosphate as a cofactor.

The protein localises to the cytoplasm. It catalyses the reaction (6R)-5,10-methylene-5,6,7,8-tetrahydrofolate + glycine + H2O = (6S)-5,6,7,8-tetrahydrofolate + L-serine. The protein operates within one-carbon metabolism; tetrahydrofolate interconversion. It functions in the pathway amino-acid biosynthesis; glycine biosynthesis; glycine from L-serine: step 1/1. In terms of biological role, catalyzes the reversible interconversion of serine and glycine with tetrahydrofolate (THF) serving as the one-carbon carrier. This reaction serves as the major source of one-carbon groups required for the biosynthesis of purines, thymidylate, methionine, and other important biomolecules. Also exhibits THF-independent aldolase activity toward beta-hydroxyamino acids, producing glycine and aldehydes, via a retro-aldol mechanism. This is Serine hydroxymethyltransferase from Microcystis aeruginosa (strain NIES-843 / IAM M-2473).